The chain runs to 62 residues: Ribulose bisphosphate carboxylase/oxygenase activase, chloroplastic (62 aa).

The protein belongs to the RuBisCO activase family.

Its subcellular location is the plastid. It is found in the chloroplast stroma. Its function is as follows. Activation of RuBisCO (ribulose-1,5-bisphosphate carboxylase/oxygenase; EC 4.1.1.39) involves the ATP-dependent carboxylation of the epsilon-amino group of lysine leading to a carbamate structure. This Vitis sp. (Grape) protein is Ribulose bisphosphate carboxylase/oxygenase activase, chloroplastic.